The sequence spans 343 residues: Biotin synthase 2 (343 aa).

The region spanning Asn-58–Arg-285 is the Radical SAM core domain. Positions 73, 77, and 80 each coordinate [4Fe-4S] cluster. [2Fe-2S] cluster is bound by residues Cys-117, Cys-148, Cys-208, and Arg-280.

The protein belongs to the radical SAM superfamily. Biotin synthase family. As to quaternary structure, homodimer. Requires [4Fe-4S] cluster as cofactor. [2Fe-2S] cluster serves as cofactor.

It catalyses the reaction (4R,5S)-dethiobiotin + (sulfur carrier)-SH + 2 reduced [2Fe-2S]-[ferredoxin] + 2 S-adenosyl-L-methionine = (sulfur carrier)-H + biotin + 2 5'-deoxyadenosine + 2 L-methionine + 2 oxidized [2Fe-2S]-[ferredoxin]. The protein operates within cofactor biosynthesis; biotin biosynthesis; biotin from 7,8-diaminononanoate: step 2/2. Functionally, catalyzes the conversion of dethiobiotin (DTB) to biotin by the insertion of a sulfur atom into dethiobiotin via a radical-based mechanism. The chain is Biotin synthase 2 from Polaromonas sp. (strain JS666 / ATCC BAA-500).